A 148-amino-acid chain; its full sequence is Putative nickel-responsive regulator (148 aa).

Histidine 88, histidine 99, histidine 101, and cysteine 107 together coordinate Ni(2+).

This sequence belongs to the transcriptional regulatory CopG/NikR family. Requires Ni(2+) as cofactor.

Transcriptional regulator. In Helicobacter pylori (strain HPAG1), this protein is Putative nickel-responsive regulator.